A 290-amino-acid polypeptide reads, in one-letter code: Glycine--tRNA ligase alpha subunit (290 aa).

It belongs to the class-II aminoacyl-tRNA synthetase family. In terms of assembly, tetramer of two alpha and two beta subunits.

The protein resides in the cytoplasm. It catalyses the reaction tRNA(Gly) + glycine + ATP = glycyl-tRNA(Gly) + AMP + diphosphate. The sequence is that of Glycine--tRNA ligase alpha subunit from Brachyspira hyodysenteriae (strain ATCC 49526 / WA1).